We begin with the raw amino-acid sequence, 159 residues long: MDERIDPDELLAAVGFDADESVLTRRQAEVLALREHDIRQSDIGELLGTSRANISSIERNARENVEKARQTVAFANTLTAPVCVDIEAGTDIYDIPPTVYAACDEAGVEVNYGSSNLLQLIDDAVDGAIQQDTVQVPLRIDVTNDGVVHVRGQSAERTE.

It belongs to the Tfx family.

In terms of biological role, putative transcriptional regulator. The polypeptide is Putative transcriptional regulatory protein rrnAC0199 (Haloarcula marismortui (strain ATCC 43049 / DSM 3752 / JCM 8966 / VKM B-1809) (Halobacterium marismortui)).